We begin with the raw amino-acid sequence, 89 residues long: Small ribosomal subunit protein uS17 (89 aa).

Belongs to the universal ribosomal protein uS17 family. As to quaternary structure, part of the 30S ribosomal subunit.

Its function is as follows. One of the primary rRNA binding proteins, it binds specifically to the 5'-end of 16S ribosomal RNA. The sequence is that of Small ribosomal subunit protein uS17 from Xanthomonas campestris pv. campestris (strain 8004).